Reading from the N-terminus, the 55-residue chain is Conotoxin Cal22b (55 aa).

Residues 1–5 (GRPSA) constitute a propeptide that is removed on maturation.

In terms of processing, contains 4 disulfide bonds. Expressed by the venom duct.

It is found in the secreted. Functionally, probable neurotoxin with unknown target. Possibly targets ion channels. The polypeptide is Conotoxin Cal22b (Californiconus californicus (California cone)).